The chain runs to 149 residues: Calmodulin-2 (149 aa).

Ala2 carries the post-translational modification N-acetylalanine. 4 EF-hand domains span residues 8–43 (EQIA…LGQN), 44–79 (PTEA…KMKD), 81–116 (DSEE…LGEK), and 117–149 (LTDE…MLAK). The Ca(2+) site is built by Asp21, Asp23, Asp25, Cys27, Glu32, Asp57, Asp59, Asn61, Thr63, Glu68, Asp94, Asp96, Asn98, Tyr100, and Asp105. At Lys116 the chain carries N6,N6,N6-trimethyllysine. Residues Asp130, Asp132, Asp134, Gln136, and Glu141 each coordinate Ca(2+).

It belongs to the calmodulin family.

In terms of biological role, calmodulin mediates the control of a large number of enzymes, ion channels and other proteins by Ca(2+). Among the enzymes to be stimulated by the calmodulin-Ca(2+) complex are a number of protein kinases and phosphatases. The protein is Calmodulin-2 (CAM72) of Petunia hybrida (Petunia).